Here is a 175-residue protein sequence, read N- to C-terminus: Co-chaperone protein HscB homolog (175 aa).

The region spanning 7-79 (SHFDLFHLPA…LKRASYLLSL (73 aa)) is the J domain.

Belongs to the HscB family. In terms of assembly, interacts with HscA and stimulates its ATPase activity.

Its function is as follows. Co-chaperone involved in the maturation of iron-sulfur cluster-containing proteins. Seems to help targeting proteins to be folded toward HscA. This chain is Co-chaperone protein HscB homolog, found in Burkholderia cenocepacia (strain ATCC BAA-245 / DSM 16553 / LMG 16656 / NCTC 13227 / J2315 / CF5610) (Burkholderia cepacia (strain J2315)).